Reading from the N-terminus, the 548-residue chain is Alpha-1,3-mannosyl-glycoprotein 4-beta-N-acetylglucosaminyltransferase B (548 aa).

The Cytoplasmic segment spans residues 1–7; that stretch reads MRLRNGT. Residues 8 to 28 traverse the membrane as a helical; Signal-anchor for type II membrane protein segment; sequence FLTLLLFCLCAFLSLSWYAAL. At 29-548 the chain is on the lumenal side; sequence SGQKGDVVDI…LSEIFLKKAD (520 aa). A coiled-coil region spans residues 36 to 83; sequence VDIYQREFLALRDRLHAAEQESLKRSKELNLVLEEIKRAVSERQALRD. N-linked (GlcNAc...) asparagine glycosylation is found at Asn-87 and Asn-103.

It belongs to the glycosyltransferase 54 family. As to quaternary structure, interacts with SLC35A3. Requires a divalent metal cation as cofactor. N-glycosylated.

Its subcellular location is the golgi apparatus membrane. The enzyme catalyses N(4)-{beta-D-GlcNAc-(1-&gt;2)-alpha-D-Man-(1-&gt;3)-[beta-D-GlcNAc-(1-&gt;2)-alpha-D-Man-(1-&gt;6)]-beta-D-Man-(1-&gt;4)-beta-D-GlcNAc-(1-&gt;4)-beta-D-GlcNAc}-L-asparaginyl-[protein] + UDP-N-acetyl-alpha-D-glucosamine = N(4)-{beta-D-GlcNAc-(1-&gt;2)-[beta-D-GlcNAc-(1-&gt;4)]-alpha-D-Man-(1-&gt;3)-[beta-D-GlcNAc-(1-&gt;2)-alpha-D-Man-(1-&gt;6)]-beta-D-Man-(1-&gt;4)-beta-D-GlcNAc-(1-&gt;4)-beta-D-GlcNAc}-L-asparaginyl-[protein] + UDP + H(+). It carries out the reaction an N(4)-{beta-D-GlcNAc-(1-&gt;2)-alpha-D-Man-(1-&gt;3)-[alpha-D-Man-(1-&gt;6)]-beta-D-Man-(1-&gt;4)-beta-D-GlcNAc-(1-&gt;4)-beta-D-GlcNAc}-L-asparaginyl-[protein] + UDP-N-acetyl-alpha-D-glucosamine = an N(4)-{beta-D-GlcNAc-(1-&gt;2)-[beta-D-GlcNAc-(1-&gt;4)]-alpha-D-Man-(1-&gt;3)-[alpha-D-Man-(1-&gt;6)]-beta-D-Man-(1-&gt;4)-beta-D-GlcNAc-(1-&gt;4)-beta-D-GlcNAc}-L-asparaginyl-[protein] + UDP + H(+). It catalyses the reaction an N(4)-{beta-D-GlcNAc-(1-&gt;2)-alpha-D-Man-(1-&gt;3)-[beta-D-GlcNAc-(1-&gt;2)-[beta-D-GlcNAc-(1-&gt;6)]-alpha-D-Man-(1-&gt;6)]-beta-D-Man-(1-&gt;4)-beta-D-GlcNAc-(1-&gt;4)-beta-D-GlcNAc}-L-asparaginyl-[protein] + UDP-N-acetyl-alpha-D-glucosamine = an N(4)-{beta-D-GlcNAc-(1-&gt;2)-[beta-D-GlcNAc-(1-&gt;4)]-alpha-D-Man-(1-&gt;3)-[beta-D-GlcNAc-(1-&gt;2)-[beta-D-GlcNAc-(1-&gt;6)]-alpha-D-Man-(1-&gt;6)]-beta-D-Man-(1-&gt;4)-beta-D-GlcNAc-(1-&gt;4)-beta-D-GlcNAc}-L-asparaginyl-[protein] + UDP + H(+). The catalysed reaction is an N(4)-{beta-D-GlcNAc-(1-&gt;2)-alpha-D-Man-(1-&gt;3)-[beta-D-GlcNAc-(1-&gt;2)-alpha-D-Man-(1-&gt;6)]-beta-D-Man-(1-&gt;4)-beta-D-GlcNAc-(1-&gt;4)-[alpha-L-Fuc-(1-&gt;6)]-beta-D-GlcNAc}-L-asparaginyl-[protein] + UDP-N-acetyl-alpha-D-glucosamine = N(4)-{beta-D-GlcNAc-(1-&gt;2)-[beta-D-GlcNAc-(1-&gt;4)]-alpha-D-Man-(1-&gt;3)-[beta-D-GlcNAc-(1-&gt;2)-alpha-D-Man-(1-&gt;6)]-beta-D-Man-(1-&gt;4)-beta-D-GlcNAc-(1-&gt;4)-[alpha-L-Fuc-(1-&gt;6)]-beta-D-GlcNAc}-asparaginyl-[protein] + UDP + H(+). The enzyme catalyses an N(4)-{beta-D-GlcNAc-(1-&gt;2)-alpha-D-Man-(1-&gt;3)-[beta-D-Gal-(1-&gt;4)-beta-D-GlcNAc-(1-&gt;2)-alpha-D-Man-(1-&gt;6)]-beta-D-Man-(1-&gt;4)-beta-D-GlcNAc-(1-&gt;4)-beta-D-GlcNAc}-L-asparaginyl-[protein] + UDP-N-acetyl-alpha-D-glucosamine = an N(4)-{beta-D-GlcNAc-(1-&gt;2)-[beta-D-GlcNAc-(1-&gt;4)]-alpha-D-Man-(1-&gt;3)-[beta-D-Gal-(1-&gt;4)-beta-D-GlcNAc-(1-&gt;2)-alpha-D-Man-(1-&gt;6)]-beta-D-Man-(1-&gt;4)-beta-D-GlcNAc-(1-&gt;4)-beta-D-GlcNAc}-L-asparaginyl-[protein] + UDP + H(+). It carries out the reaction N(4)-{beta-D-GlcNAc-(1-&gt;2)-alpha-D-Man-(1-&gt;3)-[alpha-D-Man-(1-&gt;3)-{alpha-D-Man-(1-&gt;6)}-alpha-D-Man-(1-&gt;6)]-beta-D-Man-(1-&gt;4)-beta-D-GlcNAc-(1-&gt;4)-beta-D-GlcNAc}-asparaginyl-[protein] + UDP-N-acetyl-alpha-D-glucosamine = N(4)-{beta-D-GlcNAc-(1-&gt;2)-[beta-D-GlcNAc-(1-&gt;4)]-alpha-D-Man-(1-&gt;3)-[alpha-D-Man-(1-&gt;3)-{alpha-D-Man-(1-&gt;6)}-alpha-D-Man-(1-&gt;6)]-beta-D-Man-(1-&gt;4)-beta-D-GlcNAc-(1-&gt;4)-beta-D-GlcNAc}-asparaginyl-[protein] + UDP + H(+). It catalyses the reaction N(4)-{beta-D-GlcNAc-(1-&gt;2)-alpha-D-Man-(1-&gt;3)-beta-D-Man-(1-&gt;4)-beta-D-GlcNAc-(1-&gt;4)-beta-D-GlcNAc}-asparaginyl-[protein] + UDP-N-acetyl-alpha-D-glucosamine = N(4)-{beta-D-GlcNAc-(1-&gt;2)-[beta-D-GlcNAc-(1-&gt;4)]-alpha-D-Man-(1-&gt;3)-beta-D-Man-(1-&gt;4)-beta-D-GlcNAc-(1-&gt;4)-beta-D-GlcNAc}-asparaginyl-[protein] + UDP + H(+). The protein operates within protein modification; protein glycosylation. Functionally, glycosyltransferase that catalyzes the transfer of GlcNAc from UDP-GlcNAc to the GlcNAcbeta1-2Manalpha1-3 arm of the core structure of N-linked glycans through a beta1-4 linkage and participates in the production of tri- and tetra-antennary N-linked sugar chains. Prefers complex-type N-glycans over hybrid-types. Has lower affinities for donors or acceptors than MGAT4A, suggesting that, under physiological conditions, it is not the main contributor in N-glycan biosynthesis. The chain is Alpha-1,3-mannosyl-glycoprotein 4-beta-N-acetylglucosaminyltransferase B from Mus musculus (Mouse).